We begin with the raw amino-acid sequence, 330 residues long: Ketol-acid reductoisomerase (NADP(+)) (330 aa).

The KARI N-terminal Rossmann domain occupies 1–181; that stretch reads MNVYYEQDAD…GGTKAGVIET (181 aa). Residues 24–27, Arg-47, Ser-50, Ser-52, and 82–85 each bind NADP(+); these read YGSQ and DQTQ. Residue His-107 is part of the active site. NADP(+) is bound at residue Gly-133. The 146-residue stretch at 182–327 folds into the KARI C-terminal knotted domain; it reads NFKDETETDL…AKLRNMMSWL (146 aa). Mg(2+) contacts are provided by Asp-190, Glu-194, Glu-226, and Glu-230. Substrate is bound at residue Ser-251.

Belongs to the ketol-acid reductoisomerase family. Mg(2+) serves as cofactor.

The catalysed reaction is (2R)-2,3-dihydroxy-3-methylbutanoate + NADP(+) = (2S)-2-acetolactate + NADPH + H(+). The enzyme catalyses (2R,3R)-2,3-dihydroxy-3-methylpentanoate + NADP(+) = (S)-2-ethyl-2-hydroxy-3-oxobutanoate + NADPH + H(+). It functions in the pathway amino-acid biosynthesis; L-isoleucine biosynthesis; L-isoleucine from 2-oxobutanoate: step 2/4. The protein operates within amino-acid biosynthesis; L-valine biosynthesis; L-valine from pyruvate: step 2/4. Involved in the biosynthesis of branched-chain amino acids (BCAA). Catalyzes an alkyl-migration followed by a ketol-acid reduction of (S)-2-acetolactate (S2AL) to yield (R)-2,3-dihydroxy-isovalerate. In the isomerase reaction, S2AL is rearranged via a Mg-dependent methyl migration to produce 3-hydroxy-3-methyl-2-ketobutyrate (HMKB). In the reductase reaction, this 2-ketoacid undergoes a metal-dependent reduction by NADPH to yield (R)-2,3-dihydroxy-isovalerate. The protein is Ketol-acid reductoisomerase (NADP(+)) of Chlorobium luteolum (strain DSM 273 / BCRC 81028 / 2530) (Pelodictyon luteolum).